Here is a 64-residue protein sequence, read N- to C-terminus: Outer envelope membrane protein 7 (64 aa).

At 1–11 (MGKTSGAKQAT) the chain is on the chloroplast intermembrane side. The chain crosses the membrane as a helical span at residues 12–32 (VVVAAMALGWLAIEIAFKPFL). The short motif at 29-35 (KPFLDKF) is the AKR2A-binding sequence (ABS) required for chloroplast outer envelope membrane targeting element. Topologically, residues 33 to 64 (DKFRSSIDKSDPTKDPDDFDTAATATTSKEGL) are cytoplasmic. The span at 39–48 (IDKSDPTKDP) shows a compositional bias: basic and acidic residues. The segment at 39-64 (IDKSDPTKDPDDFDTAATATTSKEGL) is disordered. The segment covering 53-64 (TAATATTSKEGL) has biased composition (low complexity).

Interacts with AKR2A. Confined to green tissues.

The protein resides in the plastid. The protein localises to the chloroplast outer membrane. In Arabidopsis thaliana (Mouse-ear cress), this protein is Outer envelope membrane protein 7.